The chain runs to 231 residues: Two-component response regulator ORR1 (231 aa).

The Response regulatory domain maps to 9-135; sequence RVLLVDDSPV…DVQRLRNCSP (127 aa). Residue aspartate 68 is modified to 4-aspartylphosphate.

Belongs to the ARR family. Type-A subfamily. Two-component system major event consists of a His-to-Asp phosphorelay between a sensor histidine kinase (HK) and a response regulator (RR). In plants, the His-to-Asp phosphorelay involves an additional intermediate named Histidine-containing phosphotransfer protein (HPt). This multistep phosphorelay consists of a His-Asp-His-Asp sequential transfer of a phosphate group between first a His and an Asp of the HK protein, followed by the transfer to a conserved His of the HPt protein and finally the transfer to an Asp in the receiver domain of the RR protein. In terms of tissue distribution, expressed in roots, leaf blades, leaf sheaths, shoot apex, flowers and panicles.

Its function is as follows. Functions as a response regulator involved in His-to-Asp phosphorelay signal transduction system. Phosphorylation of the Asp residue in the receiver domain activates the ability of the protein to promote the transcription of target genes. Type-A response regulators seem to act as negative regulators of the cytokinin signaling. Involved in adventitious (crown) root initiation under the regulation of CRL5. The sequence is that of Two-component response regulator ORR1 from Oryza sativa subsp. japonica (Rice).